The sequence spans 624 residues: uncharacterized protein (624 aa).

The tract at residues 113–249 is disordered; it reads SINVRTSATT…RFHPVTDINK (137 aa). Low complexity predominate over residues 118 to 225; sequence TSATTTESTN…ATTTESTNAS (108 aa). A compositionally biased stretch (basic and acidic residues) spans 226-249; sequence AKEDANKDGNAEDNRFHPVTDINK.

This is an uncharacterized protein from Saccharomyces cerevisiae (strain ATCC 204508 / S288c) (Baker's yeast).